A 358-amino-acid chain; its full sequence is Aromatic amino acid aminotransferase (358 aa).

Lysine 222 is subject to N6-(pyridoxal phosphate)lysine.

Belongs to the class-II pyridoxal-phosphate-dependent aminotransferase family. Homodimer. It depends on pyridoxal 5'-phosphate as a cofactor.

The enzyme catalyses an aromatic L-alpha-amino acid + 2-oxoglutarate = an aromatic oxo-acid + L-glutamate. Functionally, aminotransferase that catalyzes the conversion of aromatic amino acids and 2-oxoglutarate into corresponding aromatic oxo acids and L-glutamate. The protein is Aromatic amino acid aminotransferase of Mycobacterium sp. (strain KMS).